The chain runs to 355 residues: Zinc finger protein CONSTANS-LIKE 1 (355 aa).

Positions 12, 15, 35, 40, 55, 58, 78, and 83 each coordinate Zn(2+). Residues 12 to 54 form a B box-type 1; atypical zinc finger; sequence CDTCRSAACTVYCRADSAYLCSSCDAQVHAANRLASRHERVRV. A B box-type 2; atypical zinc finger spans residues 55–97; it reads CQSCERAPAAFFCKADAASLCTTCDSEIHSANPLARRHQRVPI. A compositionally biased stretch (polar residues) spans 252 to 264; it reads ESTTSDATVSNPR. Residues 252–281 form a disordered region; that stretch reads ESTTSDATVSNPRSPKAVTDQPPYPPAQML. Residues 286-328 enclose the CCT domain; that stretch reads REARVLRYREKKKMRKFEKTIRYASRKAYAEKRPRIKGRFAKK.

The protein belongs to the CONSTANS family. In terms of tissue distribution, highly expressed in leaves and at lower levels in stems, flowers and siliques. Not detected in roots.

It localises to the nucleus. In terms of biological role, putative transcription factor that may be involved in the light input to the circadian clock but does not affect flowering time. The polypeptide is Zinc finger protein CONSTANS-LIKE 1 (COL1) (Arabidopsis thaliana (Mouse-ear cress)).